Reading from the N-terminus, the 282-residue chain is 2-dehydro-3-deoxyphosphooctonate aldolase (282 aa).

It belongs to the KdsA family.

It is found in the cytoplasm. It carries out the reaction D-arabinose 5-phosphate + phosphoenolpyruvate + H2O = 3-deoxy-alpha-D-manno-2-octulosonate-8-phosphate + phosphate. It participates in carbohydrate biosynthesis; 3-deoxy-D-manno-octulosonate biosynthesis; 3-deoxy-D-manno-octulosonate from D-ribulose 5-phosphate: step 2/3. Its pathway is bacterial outer membrane biogenesis; lipopolysaccharide biosynthesis. The polypeptide is 2-dehydro-3-deoxyphosphooctonate aldolase (Granulibacter bethesdensis (strain ATCC BAA-1260 / CGDNIH1)).